The following is an 814-amino-acid chain: Leucine--tRNA ligase (814 aa).

Residues 42–52 (PYPSGNLHIGH) carry the 'HIGH' region motif. A 'KMSKS' region motif is present at residues 582–586 (KMSKS). Lys585 lines the ATP pocket.

The protein belongs to the class-I aminoacyl-tRNA synthetase family.

The protein localises to the cytoplasm. It catalyses the reaction tRNA(Leu) + L-leucine + ATP = L-leucyl-tRNA(Leu) + AMP + diphosphate. This Herpetosiphon aurantiacus (strain ATCC 23779 / DSM 785 / 114-95) protein is Leucine--tRNA ligase.